We begin with the raw amino-acid sequence, 261 residues long: Small ribosomal subunit protein uS2 (261 aa).

It belongs to the universal ribosomal protein uS2 family.

This Thermodesulfovibrio yellowstonii (strain ATCC 51303 / DSM 11347 / YP87) protein is Small ribosomal subunit protein uS2.